We begin with the raw amino-acid sequence, 321 residues long: Sideroflexin-3 (321 aa).

Residue M1 is modified to N-acetylmethionine. 4 helical membrane-spanning segments follow: residues 146–164 (LGMA…ALGL), 174–194 (LVGR…NIPL), 226–246 (FQVV…PPVI), and 266–286 (LQMG…CALF).

This sequence belongs to the sideroflexin family.

It is found in the mitochondrion membrane. The catalysed reaction is L-serine(in) = L-serine(out). Mitochondrial serine transporter that mediates transport of serine into mitochondria, an important step of the one-carbon metabolism pathway. Mitochondrial serine is converted to glycine and formate, which then exits to the cytosol where it is used to generate the charged folates that serve as one-carbon donors. This Bos taurus (Bovine) protein is Sideroflexin-3 (SFXN3).